A 707-amino-acid polypeptide reads, in one-letter code: Solute carrier family 15 member 1 (707 aa).

Residues 1 to 21 (MGMSKSLSCFGYPLSIFFIVV) traverse the membrane as a helical segment. Residues 22 to 53 (NEFCERFSYYGMRALLILYFRNFIGWDDNLST) are Extracellular-facing. Residue Asn-50 is glycosylated (N-linked (GlcNAc...) asparagine). The helical transmembrane segment at 54–74 (VIYHTFVALCYLTPILGALIA) threads the bilayer. At 75-82 (DAWLGKFK) the chain is on the cytoplasmic side. The helical transmembrane segment at 83–103 (TIVWLSIVYTIGQAVTSLSSV) threads the bilayer. The Extracellular portion of the chain corresponds to 104 to 118 (NELTDNNHDGTPDSL). Residues 119–139 (PVHVAVCMIGLLLIALGTGGI) form a helical membrane-spanning segment. Over 140-161 (KPCVSAFGGDQFEEGQEKQRNR) the chain is Cytoplasmic. Residues 162–182 (FFSIFYLAINAGSLLSTIITP) traverse the membrane as a helical segment. At 183 to 198 (MVRVQQCGIHVKQACY) the chain is on the extracellular side. Residues 199–219 (PLAFGIPAILMAVSLIVFIIG) form a helical membrane-spanning segment. The Cytoplasmic segment spans residues 220–276 (SGMYKKFKPQGNILSKVVKCICFAIKNRFRHRSKQFPKRAHWLDWAKEKYDERLIAQ). A helical transmembrane segment spans residues 277–297 (IKMVTRVLFLYIPLPMFWALF). Residues 298-327 (DQQGSRWTLQATTMSGRIGILEIQPDQMQT) are Extracellular-facing. A helical transmembrane segment spans residues 328 to 348 (VNTILIIILVPIMDAVVYPLI). The Cytoplasmic portion of the chain corresponds to 349 to 361 (AKCGLNFTSLKKM). A helical transmembrane segment spans residues 362–382 (TIGMFLASMAFVAAAILQVEI). Topologically, residues 383–583 (DKTLPVFPKA…PPNTMNMAWQ (201 aa)) are extracellular. An extracellular domain (ECD) region spans residues 383 to 583 (DKTLPVFPKA…PPNTMNMAWQ (201 aa)). Asn-439, Asn-498, and Asn-513 each carry an N-linked (GlcNAc...) asparagine glycan. A helical membrane pass occupies residues 584 to 604 (IPQYFLITSGEVVFSITGLEF). The Cytoplasmic portion of the chain corresponds to 605 to 618 (SYSQAPSNMKSVLQ). The helical transmembrane segment at 619-639 (AGWLLTVAVGNIIVLIVAGAG) threads the bilayer. Residues 640–644 (QINKQ) are Extracellular-facing. The chain crosses the membrane as a helical span at residues 645-665 (WAEYILFAALLLVVCVIFAIM). Residues 666-707 (ARFYTYVNPAEIEAQFEEDEKKKNPEKNDLYPSLAPVSQTQM) lie on the Cytoplasmic side of the membrane. A disordered region spans residues 682–707 (EEDEKKKNPEKNDLYPSLAPVSQTQM). Basic and acidic residues predominate over residues 684-694 (DEKKKNPEKND).

The protein belongs to the major facilitator superfamily. Proton-dependent oligopeptide transporter (POT/PTR) (TC 2.A.17) family. In terms of assembly, interacts (via extracellular domain region) with trypsin. Intestine, kidney, liver and low in brain.

It is found in the apical cell membrane. It catalyses the reaction a dipeptide(out) + H(+)(out) = a dipeptide(in) + H(+)(in). The catalysed reaction is an L-amino acid tripeptide(out) + H(+)(out) = an L-amino acid tripeptide(in) + H(+)(in). It carries out the reaction L-alanyl-L-lysine(out) + H(+)(out) = L-alanyl-L-lysine(in) + H(+)(in). The enzyme catalyses L-alanyl-L-proline(out) + H(+)(out) = L-alanyl-L-proline(in) + H(+)(in). It catalyses the reaction L-alanyl-L-valine(out) + H(+)(out) = L-alanyl-L-valine(in) + H(+)(in). The catalysed reaction is carnosine(out) + H(+)(out) = carnosine(in) + H(+)(in). It carries out the reaction glycyl-L-glutamine(out) + H(+)(out) = glycyl-L-glutamine(in) + H(+)(in). The enzyme catalyses glycyl-L-leucine(out) + H(+)(out) = glycyl-L-leucine(in) + H(+)(in). It catalyses the reaction glycyl-L-proline(out) + H(+)(out) = glycyl-L-proline(in) + H(+)(in). The catalysed reaction is glycyl-sarcosine(out) + H(+)(out) = glycyl-sarcosine(in) + H(+)(in). It carries out the reaction L-leucyl-L-leucine(out) + H(+)(out) = L-leucyl-L-leucine(in) + H(+)(in). The enzyme catalyses L-leucyl-L-proline(out) + H(+)(out) = L-leucyl-L-proline(in) + H(+)(in). It catalyses the reaction L-phenylalanyl-L-leucine(out) + H(+)(out) = L-phenylalanyl-L-leucine(in) + H(+)(in). The catalysed reaction is L-phenylalanyl-L-phenylalanine(out) + H(+)(out) = L-phenylalanyl-L-phenylalanine(in) + H(+)(in). It carries out the reaction L-lysyl-glycine(out) + H(+)(out) = L-lysyl-glycine(in) + H(+)(in). The enzyme catalyses L-tyrosylglycine(out) + H(+)(out) = L-tyrosylglycine(in) + H(+)(in). It catalyses the reaction L-alanyl-L-aspartate(out) + 2 H(+)(out) = L-alanyl-L-aspartate(in) + 2 H(+)(in). The catalysed reaction is L-aspartyl-glycine(out) + 2 H(+)(out) = L-aspartyl-glycine(in) + 2 H(+)(in). It carries out the reaction glycyl-L-aspartate(out) + 2 H(+)(out) = glycyl-L-aspartate(in) + 2 H(+)(in). The enzyme catalyses glycyl-L-glutamate(out) + 2 H(+)(out) = glycyl-L-glutamate(in) + 2 H(+)(in). It catalyses the reaction L-alanyl-L-leucyl-L-alanine(out) + H(+)(out) = L-alanyl-L-leucyl-L-alanine(in) + H(+)(in). The catalysed reaction is L-alanyl-L-prolylglycine(out) + H(+)(out) = L-alanyl-L-prolylglycine(in) + H(+)(in). It carries out the reaction glycylglycyl-L-isoleucine(out) + H(+)(out) = glycylglycyl-L-isoleucine(in) + H(+)(in). The enzyme catalyses glycylglycyl-L-proline(out) + H(+)(out) = glycylglycyl-L-proline(in) + H(+)(in). It catalyses the reaction L-methionyl-L-phenylalanyl-L-methionine(out) + H(+)(out) = L-methionyl-L-phenylalanyl-L-methionine(in) + H(+)(in). The catalysed reaction is N-acetyl-D-muramoyl-L-alanyl-D-isoglutamine(out) + 2 H(+)(out) = N-acetyl-D-muramoyl-L-alanyl-D-isoglutamine(in) + 2 H(+)(in). It carries out the reaction N(alpha)-formyl-L-methionyl-L-leucyl-L-phenylalanine(out) + 2 H(+)(out) = N(alpha)-formyl-L-methionyl-L-leucyl-L-phenylalanine(in) + 2 H(+)(in). Electrogenic proton-coupled amino-acid transporter that transports oligopeptides of 2 to 4 amino acids with a preference for dipeptides. Transports neutral and monovalently charged peptides with a proton to peptide stoichiometry of 1:1 or 2:1. Primarily responsible for the absorption of dietary di- and tripeptides from the small intestinal lumen. Mediates transepithelial transport of muramyl and N-formylated bacterial dipeptides contributing to recognition of pathogenic bacteria by the mucosal immune system. This is Solute carrier family 15 member 1 (SLC15A1) from Oryctolagus cuniculus (Rabbit).